The following is a 255-amino-acid chain: 5-oxoprolinase subunit A (255 aa).

The protein belongs to the LamB/PxpA family. In terms of assembly, forms a complex composed of PxpA, PxpB and PxpC.

The catalysed reaction is 5-oxo-L-proline + ATP + 2 H2O = L-glutamate + ADP + phosphate + H(+). Catalyzes the cleavage of 5-oxoproline to form L-glutamate coupled to the hydrolysis of ATP to ADP and inorganic phosphate. The polypeptide is 5-oxoprolinase subunit A (Corynebacterium efficiens (strain DSM 44549 / YS-314 / AJ 12310 / JCM 11189 / NBRC 100395)).